The following is a 164-amino-acid chain: CB1 cannabinoid receptor-interacting protein 1 (164 aa).

It belongs to the CNRIP family. As to quaternary structure, interacts with the cannabinoid receptor CNR1 (via C-terminus). Does not interact with cannabinoid receptor CNR2.

Suppresses cannabinoid receptor CNR1-mediated tonic inhibition of voltage-gated calcium channels. The sequence is that of CB1 cannabinoid receptor-interacting protein 1 (Cnrip1) from Rattus norvegicus (Rat).